The following is a 197-amino-acid chain: FMN-dependent NADH:quinone oxidoreductase (197 aa).

FMN is bound by residues Ser-10, 16–18 (SQS), 93–96 (MYNF), and 137–140 (TRGG).

The protein belongs to the azoreductase type 1 family. In terms of assembly, homodimer. FMN is required as a cofactor.

It carries out the reaction 2 a quinone + NADH + H(+) = 2 a 1,4-benzosemiquinone + NAD(+). It catalyses the reaction N,N-dimethyl-1,4-phenylenediamine + anthranilate + 2 NAD(+) = 2-(4-dimethylaminophenyl)diazenylbenzoate + 2 NADH + 2 H(+). In terms of biological role, quinone reductase that provides resistance to thiol-specific stress caused by electrophilic quinones. Functionally, also exhibits azoreductase activity. Catalyzes the reductive cleavage of the azo bond in aromatic azo compounds to the corresponding amines. This chain is FMN-dependent NADH:quinone oxidoreductase, found in Shewanella denitrificans (strain OS217 / ATCC BAA-1090 / DSM 15013).